The primary structure comprises 899 residues: Inositol 1,4,5-triphosphate receptor associated 1 (899 aa).

Disordered regions lie at residues 32–110 (PGTH…HRHL), 164–286 (RRGR…PLQH), 324–391 (KTAR…EEPG), and 463–486 (AAEQDKGVSPELAPAAEEEESKSG). A compositionally biased stretch (basic residues) spans 100-110 (SPHRRLSHRHL). Ser-106 is modified (phosphoserine). Residues 140–172 (SEEDKKKNLALLEEAKLVSERFLTRRGRKSRSS) form an interaction with PRKG1 region. The span at 171–180 (SSLGDSPSAV) shows a compositional bias: polar residues. The span at 181-203 (SPNLSSGASPASSRSCSLTISTS) shows a compositional bias: low complexity. A compositionally biased stretch (basic and acidic residues) spans 266–281 (TVEKTKELTVEQKENF). Polar residues predominate over residues 333-351 (PRTTAQGSGGTVSPHSLGQ). At Ser-382 the chain carries Phosphoserine. An interaction with ITPR1 region spans residues 521–567 (NVFVQLSLAFRNDSYTLESRINQAERERNLTEENTEKELENFKASIT). The stretch at 534-632 (SYTLESRINQ…MQYVENLKRT (99 aa)) forms a coiled coil. Phosphoserine is present on residues Ser-670 and Ser-683. Disordered stretches follow at residues 695–722 (LPGQAPSSSPMPSLPALSESSNGKSSIS) and 757–818 (TSQE…DQGS). The segment covering 699–715 (APSSSPMPSLPALSESS) has biased composition (low complexity). 2 stretches are compositionally biased toward basic and acidic residues: residues 759–770 (QETKAKAEEEAY) and 777–787 (GVKKTEELQDL). Positions 788–814 (KEEEEEEQKTESPEEPEEVEETQEDEK) are enriched in acidic residues. The chain crosses the membrane as a helical span at residues 839–859 (WQVIWMMAAVMLVLSVVLGLY). A disordered region spans residues 867-899 (EEADGPPGRSTCSAAQRDSWWSSGLQQELPAEQ). The segment covering 876–892 (STCSAAQRDSWWSSGLQ) has biased composition (polar residues).

In terms of assembly, part of cGMP kinase signaling complex at least composed of ACTA2/alpha-actin, CNN1/calponin H1, PLN/phospholamban, PRKG1 and ITPR1. Interacts with PRKG1/cGKI-beta and ITPR1/IP3R type I. Interacts with HCN4; regulates HCN4 channel activity. Post-translationally, phosphorylated by PRKG1/cGKI. In terms of tissue distribution, highly expressed in smooth muscle such as aorta, colon and uterus. Detected in the brain, in the thalamus, in the hippocampus and myenteric plexus. Highly expressed in megakaryocytes. Down-regulated during macrophage differentiation.

It is found in the membrane. It localises to the cytoplasm. The protein resides in the perinuclear region. The protein localises to the sarcoplasmic reticulum. In terms of biological role, plays a role as NO/PRKG1-dependent regulator of IP3-induced calcium release; its phosphorylation by PRKG1 inhibits bradykinin and IP3-induced calcium release from intracellular stores. Recruits PRKG1 to the endoplasmic reticulum and may mediate the assembly of PRKG1 and ITPR1 in a macrocomplex. Involved in PRKG1 signaling cascade leading to inhibition of platelet activation and aggregation. Also mediates NO-dependent inhibition of calcium signaling in gastrointestinal smooth muscle contributing to NO-dependent relaxation. Plays a role in the regulation of cellular excitability by regulating the hyperpolarization-activated cyclic nucleotide-gated HCN4 channel activity. This Mus musculus (Mouse) protein is Inositol 1,4,5-triphosphate receptor associated 1 (Irag1).